We begin with the raw amino-acid sequence, 178 residues long: Ribosome maturation factor RimP (178 aa).

This sequence belongs to the RimP family.

It is found in the cytoplasm. In terms of biological role, required for maturation of 30S ribosomal subunits. This is Ribosome maturation factor RimP from Corynebacterium glutamicum (strain ATCC 13032 / DSM 20300 / JCM 1318 / BCRC 11384 / CCUG 27702 / LMG 3730 / NBRC 12168 / NCIMB 10025 / NRRL B-2784 / 534).